Here is a 139-residue protein sequence, read N- to C-terminus: Fluoroacetyl-CoA thioesterase (139 aa).

Residues 40-50 (FATGFMVGLME) and Gly69 each bind substrate. Catalysis depends on residues Thr42 and Glu50. CoA contacts are provided by residues Gly69 and 76 to 77 (HT). His76 is an active-site residue. Arg120 is a substrate binding site.

As to quaternary structure, homodimer.

It carries out the reaction fluoroacetyl-CoA + H2O = fluoroacetate + CoA + H(+). Its function is as follows. Hydrolyzes fluoroacetyl-CoA before it can react with citrate synthase, and thus confers fluoroacetate resistance. Cannot use acetyl-CoA as substrate. The chain is Fluoroacetyl-CoA thioesterase (flK) from Streptantibioticus cattleyicolor (Streptomyces cattleya).